The sequence spans 139 residues: Large ribosomal subunit protein uL16c (139 aa).

The segment at 1-20 (MLSPKRTKYRKHHRGRMKGK) is disordered.

It belongs to the universal ribosomal protein uL16 family. As to quaternary structure, part of the 50S ribosomal subunit.

It is found in the plastid. It localises to the chloroplast. The polypeptide is Large ribosomal subunit protein uL16c (Pleurastrum terricola (Filamentous green alga)).